The following is a 760-amino-acid chain: MKTWLKIVFGVATSAVLALLVMCIVLRPSRVHNSEESTTRALTLKDILNGTFSYKTFFPNWISGQEYLHQSTDNNVVFYNIETGESYTILSNTTMKSVNASNYGLSPDRQFAYLESDYSKLWRYSYTATYHIYDLTNGEFIRRNELPRPIQYLCWSPVGSKLAYVYQNNIYLKQRPEDPPFQITYNGKENKIFNGIPDWVYEEEMLATKYALWWSPNGKFLAYAEFNDTEIPVIAYSYYGDEQYPRTINIPYPKAGAKNPVVRIFIIDATYPEHIGPREVPVPAMIASSDYYFSWLTWVTDDRICLQWLKRIQNVSVLSTCDFREDWQTWNCPKTQEHIEESRTGWAGGFFVSTPVFSHDTISYYKIFSDKDGYKHIHYIRDTVENAIQITSGKWEAINIFRVTQDSLFYSSNEFEGYPGRRNIYRISIGSHSPSKKCITCHLRKKRCQYYTASFSDYAKYYALVCYGPGLPISTLHDGRTDQEIKILEDNKELENALKNIQLPKEEIKKLKVDDITLWYKMILPPQFDKSKKYPLLIQVYGGPCSQSVRSIFAVSWISYLASKEGIVIALVDGRGTAFQGDKLLYAVYRKLGVYEVEDQITAVRKFIEMGFIDEKRIAIWGWSYGGYVSSLALASGTGLFKCGIAVAPVSSWEYYASIYTERFMGLPTKDDNLKHYKNSTVMARAEYFRNVDYLLIHGTADDNVHFQNSAQIAKALVNAQVDFQAMWYSDQNHGLSGLSTKHLYTHMTHFLKQCFSLSD.

Residues 1 to 4 are Cytoplasmic-facing; it reads MKTW. The chain crosses the membrane as a helical; Signal-anchor for type II membrane protein span at residues 5-25; that stretch reads LKIVFGVATSAVLALLVMCIV. Residues 26-760 are Extracellular-facing; it reads LRPSRVHNSE…FLKQCFSLSD (735 aa). 3 N-linked (GlcNAc...) asparagine glycosylation sites follow: Asn-49, Asn-92, and Asn-99. Residues Glu-203 and Glu-204 each coordinate substrate. 2 N-linked (GlcNAc...) asparagine glycosylation sites follow: Asn-227 and Asn-314. 3 cysteine pairs are disulfide-bonded: Cys-321–Cys-332, Cys-438–Cys-441, and Cys-448–Cys-466. Residues 481–512 adopt a coiled-coil conformation; sequence TDQEIKILEDNKELENALKNIQLPKEEIKKLK. The active-site Charge relay system is the Ser-624. Cysteines 643 and 755 form a disulfide. Asn-679 is a glycosylation site (N-linked (GlcNAc...) asparagine). Catalysis depends on charge relay system residues Asp-702 and His-734.

Belongs to the peptidase S9B family. In terms of assembly, homodimer; homodimerization is required for activity of both plasma membrane and soluble forms. The monomer is inactive. Heterodimer with DPP4. Interacts with PLAUR; the interaction occurs at the cell surface of invadopodia membranes. Interacts with ITGB1. Interacts with ITGA3. Associates with integrin alpha-3/beta-1; the association occurs in a collagen-dependent manner at the cell surface of invadopodia membranes. In terms of processing, N-glycosylated. Post-translationally, the N-terminus may be blocked.

Its subcellular location is the cell surface. The protein localises to the cell membrane. The protein resides in the cell projection. It is found in the lamellipodium membrane. It localises to the invadopodium membrane. Its subcellular location is the ruffle membrane. The protein localises to the membrane. The protein resides in the secreted. The enzyme catalyses Release of an N-terminal dipeptide, Xaa-Yaa-|-Zaa-, from a polypeptide, preferentially when Yaa is Pro, provided Zaa is neither Pro nor hydroxyproline.. The catalysed reaction is Hydrolysis of Pro-|-Xaa &gt;&gt; Ala-|-Xaa in oligopeptides.. Gelatinase activity is inhibited by serine-protease inhibitors, such as phenylmethylsulfonyl fluoride (PMSF), 4-(2-aminoethyl)-benzenesulfonyl fluoride hydrochloride (AEBSF), 4-amidino phenylsulfonyl fluoride (APSF) and diisopropyl fluorophosphate (DFP), N-ethylmaleimide (NEM) and phenylmethylsulfonyl fluoride (PMSF). Dipeptidyl peptidase activity is inhibited by 2,2'-azino-bis(3-ethylbenzthiazoline-6-sulfonic acid), diisopropylfluorophosphate (DFP). Prolyl endopeptidase activity is inhibited by the boronic acid peptide Ac-Gly-BoroPro, Ac-Gly-Pro-chloromethyl ketone and Thr-Ser-Gly-chloromethyl ketone. Its function is as follows. Cell surface glycoprotein serine protease that participates in extracellular matrix degradation and involved in many cellular processes including tissue remodeling, fibrosis, wound healing, inflammation and tumor growth. Both plasma membrane and soluble forms exhibit post-proline cleaving endopeptidase activity, with a marked preference for Ala/Ser-Gly-Pro-Ser/Asn/Ala consensus sequences, on substrate such as alpha-2-antiplasmin SERPINF2 and SPRY2. Degrade also gelatin, heat-denatured type I collagen, but not native collagen type I and IV, vibronectin, tenascin, laminin, fibronectin, fibrin or casein. Also has dipeptidyl peptidase activity, exhibiting the ability to hydrolyze the prolyl bond two residues from the N-terminus of synthetic dipeptide substrates provided that the penultimate residue is proline, with a preference for Ala-Pro, Ile-Pro, Gly-Pro, Arg-Pro and Pro-Pro. Natural neuropeptide hormones for dipeptidyl peptidase are the neuropeptide Y (NPY), peptide YY (PYY), substance P (TAC1) and brain natriuretic peptide 32 (NPPB). The plasma membrane form, in association with either DPP4, PLAUR or integrins, is involved in the pericellular proteolysis of the extracellular matrix (ECM), and hence promotes cell adhesion, migration and invasion through the ECM. Plays a role in tissue remodeling during development and wound healing. Participates in the cell invasiveness towards the ECM in malignant melanoma cancers. Enhances tumor growth progression by increasing angiogenesis, collagen fiber degradation and apoptosis and by reducing antitumor response of the immune system. Promotes glioma cell invasion through the brain parenchyma by degrading the proteoglycan brevican. Acts as a tumor suppressor in melanocytic cells through regulation of cell proliferation and survival in a serine protease activity-independent manner. The sequence is that of Prolyl endopeptidase FAP from Bos taurus (Bovine).